Here is a 348-residue protein sequence, read N- to C-terminus: Phosphoribosylformylglycinamidine cyclo-ligase (348 aa).

The protein belongs to the AIR synthase family.

The protein resides in the cytoplasm. The catalysed reaction is 2-formamido-N(1)-(5-O-phospho-beta-D-ribosyl)acetamidine + ATP = 5-amino-1-(5-phospho-beta-D-ribosyl)imidazole + ADP + phosphate + H(+). Its pathway is purine metabolism; IMP biosynthesis via de novo pathway; 5-amino-1-(5-phospho-D-ribosyl)imidazole from N(2)-formyl-N(1)-(5-phospho-D-ribosyl)glycinamide: step 2/2. This chain is Phosphoribosylformylglycinamidine cyclo-ligase, found in Geobacter metallireducens (strain ATCC 53774 / DSM 7210 / GS-15).